Reading from the N-terminus, the 293-residue chain is Proline iminopeptidase (293 aa).

Residues 28–277 enclose the AB hydrolase-1 domain; the sequence is KPLVLLHGGP…YSRHMPFVEE (250 aa). S104 serves as the catalytic Nucleophile. Residue D244 is part of the active site. The active-site Proton donor is H271.

This sequence belongs to the peptidase S33 family.

The enzyme catalyses Release of N-terminal proline from a peptide.. Releases the N-terminal proline from various substrates. The sequence is that of Proline iminopeptidase from Clostridioides difficile (strain 630) (Peptoclostridium difficile).